We begin with the raw amino-acid sequence, 525 residues long: RNA-directed RNA polymerase (525 aa).

Residues 72–272 form the RdRp catalytic domain; it reads LVYADNIYIV…DKERLFCSAA (201 aa).

Interacts with VP3 in the cytoplasm. Post-translationally, may exist in multiple phosphorylated forms.

It localises to the virion. It catalyses the reaction RNA(n) + a ribonucleoside 5'-triphosphate = RNA(n+1) + diphosphate. Functionally, RNA-dependent RNA polymerase which is found both free and covalently attached to the genomic RNA. May also contain guanylyl and methyl transferase activities. This Gallus gallus (Chicken) protein is RNA-directed RNA polymerase (VP1).